A 482-amino-acid chain; its full sequence is Hydrogenase transcriptional regulatory protein HoxA (482 aa).

One can recognise a Response regulatory domain in the interval 7–121 (TVLVVDDETR…HLIDTVRQAV (115 aa)). 4-aspartylphosphate is present on Asp55. Positions 167–394 (APGSPLDAVC…LRNEIYRAVA (228 aa)) constitute a Sigma-54 factor interaction domain. Residues 193–200 (GESGTGKE) and 265–274 (EIGDTSPAFQ) contribute to the ATP site. The H-T-H motif DNA-binding region spans 456 to 475 (KTHAAKELGLSRVGLRQKLL).

It is found in the cytoplasm. Its function is as follows. Probable member of the two-component regulatory system involved in the regulation of the hydrogenase activity. HoxA is probably phosphorylated by a sensory component (which could be HoxX) and then acts in conjunction with sigma-54 as a transcriptional activator. This chain is Hydrogenase transcriptional regulatory protein HoxA (hoxA), found in Cupriavidus necator (strain ATCC 17699 / DSM 428 / KCTC 22496 / NCIMB 10442 / H16 / Stanier 337) (Ralstonia eutropha).